The sequence spans 313 residues: Putative stilbene synthase 2 (313 aa).

The active site involves cysteine 88. Substrate contacts are provided by residues leucine 191 and 229-231; that span reads GGP.

It belongs to the thiolase-like superfamily. Chalcone/stilbene synthases family. Homodimer.

It is found in the cytoplasm. The catalysed reaction is 4-coumaroyl-CoA + 3 malonyl-CoA + 3 H(+) = trans-resveratrol + 4 CO2 + 4 CoA. It participates in phytoalexin biosynthesis; 3,4',5-trihydroxystilbene biosynthesis; 3,4',5-trihydroxystilbene from trans-4-coumarate: step 2/2. The sequence is that of Putative stilbene synthase 2 from Arachis hypogaea (Peanut).